We begin with the raw amino-acid sequence, 134 residues long: 15.4 kDa class V heat shock protein (134 aa).

In terms of domain architecture, sHSP spans 19-126 (SLNNYQENHV…LIDPSDVPES (108 aa)).

This sequence belongs to the small heat shock protein (HSP20) family. In terms of assembly, may form oligomeric structures.

Its subcellular location is the cytoplasm. This is 15.4 kDa class V heat shock protein (HSP15.4) from Arabidopsis thaliana (Mouse-ear cress).